Consider the following 195-residue polypeptide: PRELI domain containing protein 3B (195 aa).

The PRELI/MSF1 domain occupies 1-172 (MKIWTSEHVF…VIHKLNAEIE (172 aa)). Phosphoserine is present on residues Ser46 and Ser51.

It belongs to the slowmo family.

The chain is PRELI domain containing protein 3B (Prelid3b) from Rattus norvegicus (Rat).